Here is an 817-residue protein sequence, read N- to C-terminus: Nuclear hormone receptor family member nhr-48 (817 aa).

The tract at residues 49–91 (YNDDKDDPFYEDEGSGGGTSGGGKKSSRKRANTTSSSGGNEKE) is disordered. The span at 52 to 62 (DKDDPFYEDEG) shows a compositional bias: acidic residues. Positions 63–72 (SGGGTSGGGK) are enriched in gly residues. The segment at residues 97-172 (NKVCRVCGDK…VGMKKEWIMS (76 aa)) is a DNA-binding region (nuclear receptor). NR C4-type zinc fingers lie at residues 100-120 (CRVC…CESC) and 136-155 (CPFN…CQRC). The span at 202 to 212 (ACMEDESENSY) shows a compositional bias: acidic residues. 2 disordered regions span residues 202–221 (ACME…PSHQ) and 258–284 (MNFY…SSQL). Residues 273-284 (LPSNSCASSSQL) show a composition bias toward polar residues.

Belongs to the nuclear hormone receptor family.

The protein localises to the nucleus. In terms of biological role, orphan nuclear receptor. This Caenorhabditis elegans protein is Nuclear hormone receptor family member nhr-48 (nhr-48).